A 418-amino-acid polypeptide reads, in one-letter code: FK506-binding protein 3 (418 aa).

3 disordered regions span residues 49–133 (PSTL…DDEF), 172–273 (SLTG…ETKK), and 289–309 (LEEG…KPKT). Acidic residues predominate over residues 61-89 (YDDEDDAGGLLGDYDEDELDISEEEEEEE). Basic residues predominate over residues 93 to 103 (KSKKGKGKGKS). Acidic residues-rich tracts occupy residues 108-133 (EEEE…DDEF) and 186-224 (GYDD…DASD). The span at 225–239 (VEAKIQELVEKEQSK) shows a compositional bias: basic and acidic residues. A compositionally biased stretch (acidic residues) spans 251-264 (PEEEEEEEEEEEEE). One can recognise a PPIase FKBP-type domain in the interval 332–418 (GSKVGMRYIG…TFDVKLVSLK (87 aa)).

Belongs to the FKBP-type PPIase family. FKBP3/4 subfamily.

It localises to the nucleus. The protein resides in the nucleolus. It carries out the reaction [protein]-peptidylproline (omega=180) = [protein]-peptidylproline (omega=0). With respect to regulation, inhibited by both FK506 and rapamycin. Its function is as follows. PPIases accelerate the folding of proteins. It catalyzes the cis-trans isomerization of proline imidic peptide bonds in oligopeptides. The protein is FK506-binding protein 3 (FPR3) of Kluyveromyces lactis (strain ATCC 8585 / CBS 2359 / DSM 70799 / NBRC 1267 / NRRL Y-1140 / WM37) (Yeast).